Reading from the N-terminus, the 230-residue chain is Ropporin-1-like protein (230 aa).

The 38-residue stretch at 17–54 (PELPDILKQFTKAAIRTQPADVLQWSAGYFSALSRGDP) folds into the RIIa domain.

The protein belongs to the ropporin family. As to quaternary structure, component of the axonemal radial spoke complex 1 (RS1), at least composed of spoke head proteins RSPH1, RSPH3, RSPH9 and the cilia-specific component RSPH4A or sperm-specific component RSPH6A, spoke stalk proteins RSPH14, DNAJB13, DYDC1, ROPN1L and NME5, and the anchor protein IQUB. May interact with AKAP3. Interacts with FSCB; the interaction increases upon spermatozoa capacitation conditions. Interacts with CFAP61. Sumoylated, sumoylation decreases upon spermatozoa capacitation conditions.

It is found in the cell projection. The protein localises to the cilium. It localises to the flagellum. Functionally, functions as part of axonemal radial spoke complexes that play an important part in the motility of sperm and cilia. Important for male fertility. With ROPN1, involved in fibrous sheath integrity and sperm motility, plays a role in PKA-dependent signaling processes required for spermatozoa capacitation. The protein is Ropporin-1-like protein (ROPN1L) of Macaca fascicularis (Crab-eating macaque).